The sequence spans 187 residues: MPRVVPDQRSKFENEEFFRKLSRECEIKYTGFRDRPHEERQTRFQNACRDGRSEIAFVATGTNLSLQFFPASWQGEQRQTPSREYVDLEREAGKVYLKAPMILNGVCVIWKGWIDLHRLDGMGCLEFDEERAQQEDALAQQAFEEARRRTREFEDRDRSHREEMEARRQQDPSPGSNLGGGDDLKLR.

A Phosphoserine; by CK2 modification is found at Ser10. The segment at 139–187 (AQQAFEEARRRTREFEDRDRSHREEMEARRQQDPSPGSNLGGGDDLKLR) is disordered. Residues 144 to 170 (EEARRRTREFEDRDRSHREEMEARRQQ) show a composition bias toward basic and acidic residues. A Phosphoserine; by PKC modification is found at Ser159.

It belongs to the CBF-beta family. Heterodimer with RUNX1, RUNX2 and RUNX3. Interacts with COPRS. Found in a complex with PRMT5 and RUNX1. In terms of tissue distribution, expressed in all tissues tested. Highest level in thymus, but also abundantly expressed in muscle, lung and brain.

Its subcellular location is the nucleus. In terms of biological role, forms the heterodimeric complex core-binding factor (CBF) with RUNX family proteins (RUNX1, RUNX2, and RUNX3). RUNX members modulate the transcription of their target genes through recognizing the core consensus binding sequence 5'-TGTGGT-3', or very rarely, 5'-TGCGGT-3', within their regulatory regions via their runt domain, while CBFB is a non-DNA-binding regulatory subunit that allosterically enhances the sequence-specific DNA-binding capacity of RUNX. The heterodimers bind to the core site of a number of enhancers and promoters, including murine leukemia virus, polyomavirus enhancer, T-cell receptor enhancers, LCK, IL3 and GM-CSF promoters. CBF complexes repress ZBTB7B transcription factor during cytotoxic (CD8+) T cell development. They bind to RUNX-binding sequence within the ZBTB7B locus acting as transcriptional silencer and allowing for cytotoxic T cell differentiation. The protein is Core-binding factor subunit beta (Cbfb) of Mus musculus (Mouse).